Reading from the N-terminus, the 125-residue chain is Phosphoribosyl-AMP cyclohydrolase (125 aa).

Position 80 (D80) interacts with Mg(2+). C81 provides a ligand contact to Zn(2+). Mg(2+) contacts are provided by D82 and D84. Positions 97 and 104 each coordinate Zn(2+).

Belongs to the PRA-CH family. In terms of assembly, homodimer. It depends on Mg(2+) as a cofactor. Zn(2+) is required as a cofactor.

The protein localises to the cytoplasm. The catalysed reaction is 1-(5-phospho-beta-D-ribosyl)-5'-AMP + H2O = 1-(5-phospho-beta-D-ribosyl)-5-[(5-phospho-beta-D-ribosylamino)methylideneamino]imidazole-4-carboxamide. It functions in the pathway amino-acid biosynthesis; L-histidine biosynthesis; L-histidine from 5-phospho-alpha-D-ribose 1-diphosphate: step 3/9. Functionally, catalyzes the hydrolysis of the adenine ring of phosphoribosyl-AMP. The chain is Phosphoribosyl-AMP cyclohydrolase from Leifsonia xyli subsp. xyli (strain CTCB07).